We begin with the raw amino-acid sequence, 479 residues long: ATP synthase subunit beta (479 aa).

Position 158–165 (158–165 (GGAGLGKT)) interacts with ATP.

This sequence belongs to the ATPase alpha/beta chains family. In terms of assembly, F-type ATPases have 2 components, CF(1) - the catalytic core - and CF(0) - the membrane proton channel. CF(1) has five subunits: alpha(3), beta(3), gamma(1), delta(1), epsilon(1). CF(0) has three main subunits: a(1), b(2) and c(9-12). The alpha and beta chains form an alternating ring which encloses part of the gamma chain. CF(1) is attached to CF(0) by a central stalk formed by the gamma and epsilon chains, while a peripheral stalk is formed by the delta and b chains.

The protein localises to the cell inner membrane. The enzyme catalyses ATP + H2O + 4 H(+)(in) = ADP + phosphate + 5 H(+)(out). In terms of biological role, produces ATP from ADP in the presence of a proton gradient across the membrane. The catalytic sites are hosted primarily by the beta subunits. This chain is ATP synthase subunit beta, found in Rhodopirellula baltica (strain DSM 10527 / NCIMB 13988 / SH1).